The sequence spans 324 residues: MKINLDRTSSGFCIGVQGTIHVAEEKLAAKETLFSLGDVVHNEVEVKRLENLGLTTIDEAVFKELQNTSVLIRAHGEPPETYATAERNKLDITDTTCPVVSKLQRTARLLCQLGYQVIIYGKHTHPEVIGINGHCSNRAVIIKHADLSDPEELKTLDTTIKTALISQTTMDVPGFYELKTNLEKRFAESDETAGKPWTAIRDIDITAAMTGIGTMPRTVFKDTICRQVSSRNKKLHDFALANSCVIFVAGRKSSNGQVLFGICRSANPRSYFIEDIEDLEDSWFRDNEGSPVESIGICGATSTPMWLLEKVAEFIDGRFNHRDA.

C13 contributes to the [4Fe-4S] cluster binding site. (2E)-4-hydroxy-3-methylbut-2-enyl diphosphate is bound by residues H41 and H75. H41 and H75 together coordinate dimethylallyl diphosphate. Isopentenyl diphosphate-binding residues include H41 and H75. C97 contributes to the [4Fe-4S] cluster binding site. H125 lines the (2E)-4-hydroxy-3-methylbut-2-enyl diphosphate pocket. H125 serves as a coordination point for dimethylallyl diphosphate. Position 125 (H125) interacts with isopentenyl diphosphate. E127 serves as the catalytic Proton donor. Residue T168 coordinates (2E)-4-hydroxy-3-methylbut-2-enyl diphosphate. Residue C225 participates in [4Fe-4S] cluster binding. (2E)-4-hydroxy-3-methylbut-2-enyl diphosphate is bound by residues S253, S254, N255, and S302. S253, S254, N255, and S302 together coordinate dimethylallyl diphosphate. Isopentenyl diphosphate is bound by residues S253, S254, N255, and S302.

The protein belongs to the IspH family. Requires [4Fe-4S] cluster as cofactor.

It catalyses the reaction isopentenyl diphosphate + 2 oxidized [2Fe-2S]-[ferredoxin] + H2O = (2E)-4-hydroxy-3-methylbut-2-enyl diphosphate + 2 reduced [2Fe-2S]-[ferredoxin] + 2 H(+). The enzyme catalyses dimethylallyl diphosphate + 2 oxidized [2Fe-2S]-[ferredoxin] + H2O = (2E)-4-hydroxy-3-methylbut-2-enyl diphosphate + 2 reduced [2Fe-2S]-[ferredoxin] + 2 H(+). It participates in isoprenoid biosynthesis; dimethylallyl diphosphate biosynthesis; dimethylallyl diphosphate from (2E)-4-hydroxy-3-methylbutenyl diphosphate: step 1/1. Its pathway is isoprenoid biosynthesis; isopentenyl diphosphate biosynthesis via DXP pathway; isopentenyl diphosphate from 1-deoxy-D-xylulose 5-phosphate: step 6/6. Functionally, catalyzes the conversion of 1-hydroxy-2-methyl-2-(E)-butenyl 4-diphosphate (HMBPP) into a mixture of isopentenyl diphosphate (IPP) and dimethylallyl diphosphate (DMAPP). Acts in the terminal step of the DOXP/MEP pathway for isoprenoid precursor biosynthesis. The sequence is that of 4-hydroxy-3-methylbut-2-enyl diphosphate reductase from Chlorobium limicola (strain DSM 245 / NBRC 103803 / 6330).